We begin with the raw amino-acid sequence, 605 residues long: Heparan-sulfate 6-O-sulfotransferase 2 (605 aa).

The Cytoplasmic segment spans residues 1-4 (MALP). Positions 1–66 (MALPACAVRE…GVSHGFHTRP (66 aa)) are disordered. The chain crosses the membrane as a helical; Signal-anchor for type II membrane protein span at residues 5–27 (ACAVREFEPPRQPERGAPVRTTC). Positions 9 to 18 (REFEPPRQPE) are enriched in basic and acidic residues. Over 28 to 605 (PRRHSRVEAE…DYIGSVEKWR (578 aa)) the chain is Lumenal. Asn-209 is a glycosylation site (N-linked (GlcNAc...) asparagine). 3'-phosphoadenylyl sulfate is bound at residue 233-241 (HIQKTGGTT). Residues 263-264 (KK), Arg-280, Trp-285, and His-290 contribute to the substrate site. Residue His-290 is the Proton acceptor of the active site. Residues Arg-325 and Ser-333 each coordinate 3'-phosphoadenylyl sulfate. Substrate-binding residues include His-337 and Trp-344. Asn-404 carries an N-linked (GlcNAc...) asparagine glycan. A 3'-phosphoadenylyl sulfate-binding site is contributed by 457 to 459 (TQY). Residue Asn-460 is glycosylated (N-linked (GlcNAc...) asparagine). 463–464 (RA) contacts 3'-phosphoadenylyl sulfate. Positions 530–605 (FQSQGQGQSQ…DYIGSVEKWR (76 aa)) are disordered. Positions 531 to 571 (QSQGQGQSQNPNQNQSQNPNPNANQNLTQNLMQNLTQSLSQ) are enriched in low complexity. 5 N-linked (GlcNAc...) asparagine glycosylation sites follow: Asn-544, Asn-556, Asn-564, Asn-589, and Asn-592. Positions 579 to 597 (KQNSGKEQNDNTSNGTNDY) are enriched in polar residues.

This sequence belongs to the sulfotransferase 6 family.

It is found in the membrane. The enzyme catalyses alpha-D-glucosaminyl-[heparan sulfate](n) + 3'-phosphoadenylyl sulfate = 6-sulfo-alpha-D-glucosaminyl-[heparan sulfate](n) + adenosine 3',5'-bisphosphate + H(+). Functionally, 6-O-sulfation enzyme which catalyzes the transfer of sulfate from 3'-phosphoadenosine 5'-phosphosulfate (PAPS) to position 6 of the N-sulfoglucosamine residue (GlcNS) of heparan sulfate. The sequence is that of Heparan-sulfate 6-O-sulfotransferase 2 from Homo sapiens (Human).